A 143-amino-acid polypeptide reads, in one-letter code: Large ribosomal subunit protein uL11 (143 aa).

Belongs to the universal ribosomal protein uL11 family. As to quaternary structure, part of the ribosomal stalk of the 50S ribosomal subunit. Interacts with L10 and the large rRNA to form the base of the stalk. L10 forms an elongated spine to which L12 dimers bind in a sequential fashion forming a multimeric L10(L12)X complex. In terms of processing, one or more lysine residues are methylated.

Functionally, forms part of the ribosomal stalk which helps the ribosome interact with GTP-bound translation factors. This chain is Large ribosomal subunit protein uL11, found in Borreliella burgdorferi (strain ATCC 35210 / DSM 4680 / CIP 102532 / B31) (Borrelia burgdorferi).